The primary structure comprises 452 residues: UDP-N-acetylmuramate--L-alanine ligase (452 aa).

An ATP-binding site is contributed by 110–116; it reads GTHGKTT.

It belongs to the MurCDEF family.

The protein localises to the cytoplasm. The enzyme catalyses UDP-N-acetyl-alpha-D-muramate + L-alanine + ATP = UDP-N-acetyl-alpha-D-muramoyl-L-alanine + ADP + phosphate + H(+). The protein operates within cell wall biogenesis; peptidoglycan biosynthesis. Its function is as follows. Cell wall formation. This chain is UDP-N-acetylmuramate--L-alanine ligase, found in Francisella philomiragia subsp. philomiragia (strain ATCC 25017 / CCUG 19701 / FSC 153 / O#319-036).